Here is a 1102-residue protein sequence, read N- to C-terminus: ATP-dependent DNA helicase MPH1 (1102 aa).

A disordered region spans residues 19–55; that stretch reads ALDKPATSGLHSREQEQQRDISNATPHTSTDLELEDF. Polar residues predominate over residues 38–49; sequence DISNATPHTSTD. The Helicase ATP-binding domain occupies 147-315; the sequence is IVKNGLFNNT…DVIDNLGVSH (169 aa). Residue 160–167 coordinates ATP; it reads LPTGLGKT. A DEAH box motif is present at residues 263 to 266; that stretch reads DEAH. The 162-residue stretch at 490 to 651 folds into the Helicase C-terminal domain; it reads NLLNYFMDAG…GSRFNFRHDL (162 aa). Disordered stretches follow at residues 672–702, 720–743, 818–837, and 858–1102; these read PIEN…FNMP, ASKT…DEIS, SQGI…KSRY, and SGRK…SESG. Positions 687–699 are enriched in basic residues; that stretch reads RSTRGKKASKKKF. The span at 822–837 shows a compositional bias: basic and acidic residues; sequence ETRHTKPHGDTDKSRY. Residues 1003-1019 show a composition bias toward low complexity; the sequence is SSGAASKSGSTASTAAK. The segment covering 1069-1082 has biased composition (acidic residues); it reads SDDDDDDNDDEDDV.

It belongs to the DEAD box helicase family. DEAH subfamily. FANCM sub-subfamily. In terms of assembly, interacts with the MHF histone-fold complex to form the FANCM-MHF complex.

It is found in the nucleus. The catalysed reaction is ATP + H2O = ADP + phosphate + H(+). In terms of biological role, ATP-dependent DNA helicase involved in DNA damage repair by homologous recombination and in genome maintenance. Capable of unwinding D-loops. Plays a role in limiting crossover recombinants during mitotic DNA double-strand break (DSB) repair. Component of a FANCM-MHF complex which promotes gene conversion at blocked replication forks, probably by reversal of the stalled fork. The protein is ATP-dependent DNA helicase MPH1 of Pyricularia oryzae (strain 70-15 / ATCC MYA-4617 / FGSC 8958) (Rice blast fungus).